The sequence spans 860 residues: Protein argonaute-3 (860 aa).

Residues 230–349 (PVIQFMCEVL…LPLEVCNIVA (120 aa)) enclose the PAZ domain. In terms of domain architecture, Piwi spans 518 to 819 (LIIVILPGKT…VAFRARYHLV (302 aa)). The interval 530-567 (YAEVKRAGDTLLGMATQCVQVKNVIKTSPQTLSNLCLK) is interaction with guide RNA. Residues Asp-598, Glu-638, and Asp-670 each coordinate a divalent metal cation. Positions 758 to 805 (QGTSRPSHYHVLWDDNCFTADELQLLTYQLCHTYVRCTRSVSIPAPAY) are interaction with guide RNA. A divalent metal cation is bound at residue His-808.

The protein belongs to the argonaute family. Ago subfamily.

It localises to the cytoplasm. The protein localises to the P-body. It carries out the reaction Endonucleolytic cleavage to 5'-phosphomonoester.. In terms of biological role, required for RNA-mediated gene silencing (RNAi). Binds to short RNAs such as microRNAs (miRNAs) and represses the translation of mRNAs which are complementary to them. Possesses RNA slicer activity but only on select RNAs bearing 5'- and 3'-flanking sequences to the region of guide-target complementarity. The polypeptide is Protein argonaute-3 (AGO3) (Gallus gallus (Chicken)).